Reading from the N-terminus, the 321-residue chain is Probable 3-hydroxyisobutyrate dehydrogenase, mitochondrial (321 aa).

NAD(+) contacts are provided by residues 23-52 (KTVGFIGLGNMGGHQAINLIKKGHNLIVFD), 86-87 (LP), and T117. Residue K192 is part of the active site. An NAD(+)-binding site is contributed by K267.

Belongs to the HIBADH-related family. 3-hydroxyisobutyrate dehydrogenase subfamily.

The protein localises to the mitochondrion. It carries out the reaction 3-hydroxy-2-methylpropanoate + NAD(+) = 2-methyl-3-oxopropanoate + NADH + H(+). It functions in the pathway amino-acid degradation; L-valine degradation. The sequence is that of Probable 3-hydroxyisobutyrate dehydrogenase, mitochondrial (hibA) from Dictyostelium discoideum (Social amoeba).